A 210-amino-acid chain; its full sequence is Glutathione S-transferase P (210 aa).

One can recognise a GST N-terminal domain in the interval 2–81 (PPYTIVYFPV…HLGRSLGLYG (80 aa)). Tyr-4 is subject to Phosphotyrosine; by EGFR. Glutathione is bound by residues Tyr-8, Arg-14, Trp-39, Lys-45, and 52 to 53 (QL). At Thr-62 the chain carries Phosphothreonine. A glutathione-binding site is contributed by 65 to 66 (QS). A GST C-terminal domain is found at 83–204 (DQKEAALVDM…SSPDHLNRPI (122 aa)). Residues Lys-103 and Lys-116 each carry the N6-succinyllysine modification. The residue at position 128 (Lys-128) is an N6-acetyllysine.

This sequence belongs to the GST superfamily. Pi family. Homodimer. Interacts with CDK5. As to expression, present in kidney, lung, testis and placenta, very low levels in liver.

It localises to the cytoplasm. The protein localises to the mitochondrion. The protein resides in the nucleus. The catalysed reaction is RX + glutathione = an S-substituted glutathione + a halide anion + H(+). It carries out the reaction prostaglandin J2 + glutathione = prostaglandin J2-S-(R)-glutathione. The enzyme catalyses prostaglandin J2 + glutathione = prostaglandin J2-S-(S)-glutathione. It catalyses the reaction prostaglandin A2 + glutathione = prostaglandin A2-S-(S)-glutathione. The catalysed reaction is 11(S)-hydroxy-14(S),15(S)-epoxy-(5Z,8Z,12E)-eicosatrienoate + glutathione = (11S,15S)-dihydroxy-14(R)-S-glutathionyl-(5Z,8Z,12E)-eicosatrienoate. Functionally, conjugation of reduced glutathione to a wide number of exogenous and endogenous hydrophobic electrophiles. Involved in the formation of glutathione conjugates of both prostaglandin A2 (PGA2) and prostaglandin J2 (PGJ2). Participates in the formation of novel hepoxilin regioisomers. Negatively regulates CDK5 activity via p25/p35 translocation to prevent neurodegeneration. The chain is Glutathione S-transferase P from Rattus norvegicus (Rat).